The following is a 712-amino-acid chain: UvrABC system protein B (712 aa).

Positions 35 to 421 (RRVQAGEKDV…SDGAVEQIIR (387 aa)) constitute a Helicase ATP-binding domain. 48 to 55 (GATGTGKS) serves as a coordination point for ATP. The Beta-hairpin signature appears at 101–124 (YYDYYQPEAYVPQSDTYIEKDSSI). Residues 438–604 (QIDDLVHEIR…PLRKKINDIV (167 aa)) form the Helicase C-terminal domain. Residues 625–655 (TKEGKGAKAPVPALGGQKTGGAKAARGRAKE) are disordered. Residues 667 to 702 (AEQIEDLTTRMRAAAADLQFEIAARLRDEVSEMKKE) enclose the UVR domain.

It belongs to the UvrB family. In terms of assembly, forms a heterotetramer with UvrA during the search for lesions. Interacts with UvrC in an incision complex.

It is found in the cytoplasm. The UvrABC repair system catalyzes the recognition and processing of DNA lesions. A damage recognition complex composed of 2 UvrA and 2 UvrB subunits scans DNA for abnormalities. Upon binding of the UvrA(2)B(2) complex to a putative damaged site, the DNA wraps around one UvrB monomer. DNA wrap is dependent on ATP binding by UvrB and probably causes local melting of the DNA helix, facilitating insertion of UvrB beta-hairpin between the DNA strands. Then UvrB probes one DNA strand for the presence of a lesion. If a lesion is found the UvrA subunits dissociate and the UvrB-DNA preincision complex is formed. This complex is subsequently bound by UvrC and the second UvrB is released. If no lesion is found, the DNA wraps around the other UvrB subunit that will check the other stand for damage. The sequence is that of UvrABC system protein B from Streptomyces coelicolor (strain ATCC BAA-471 / A3(2) / M145).